Here is a 473-residue protein sequence, read N- to C-terminus: MQPFVLYNSEQRKKVEFVPRKEGHIDMYVCGMTVYDYCHIGHARVMVAFDYIIRFLRSQGWKVRYIRNITDIDDKIIKRANENGETIQQLTMRFIDAMNEDAANLGCLAPDEAPKATEYIDQMQNMIGNLVNKGAAYPASNGDVYFEVTKFEKYGRLSGRKLDDMQAGASERVDVEVEKKHPFDFVLWKHAKENEPSWASPWGNGRPGWHIECSAMSTCCLGNHFDIHGGGSDLMFPHHENEIAQSEASTGEQYVNYWIHVGFINVDGEKMSKSLGNFFTIRDVMEKFHPEVIRYFIVSSHYRSPVNFSDVALKEAKTSLTRFYHSFKAYQQVYGQTTTETLDQSFVERFNNAMCDDFNTAEAMAVLFELNKELNRAVKEEQADQATVLYSTLRHLTNILGLVQHNVDDFLKSDIGQEALALSDAEIEDFIQQRVDAKKAKDFAKADSIRQSLLEQGVVLEDTRQGTVWRRAD.

Cysteine 30 provides a ligand contact to Zn(2+). Positions 32–42 match the 'HIGH' region motif; it reads MTVYDYCHIGH. 3 residues coordinate Zn(2+): cysteine 213, histidine 238, and glutamate 242. Residues 270–274 carry the 'KMSKS' region motif; that stretch reads KMSKS. Lysine 273 is an ATP binding site.

It belongs to the class-I aminoacyl-tRNA synthetase family. Monomer. Zn(2+) is required as a cofactor.

The protein localises to the cytoplasm. It catalyses the reaction tRNA(Cys) + L-cysteine + ATP = L-cysteinyl-tRNA(Cys) + AMP + diphosphate. The protein is Cysteine--tRNA ligase of Acinetobacter baumannii (strain SDF).